We begin with the raw amino-acid sequence, 330 residues long: MLSLKLPRLFSIDQIPQVFHEQGILFGYRHPQSSATACILSLFQMTNETLNIWTHLLPFWFFAWRFVTALYMTDIKNDSYSWPMLVYMCTSCVYPLVSSCAHTFSSMSKNARHICYFLDYGAVNLFSLGSAIAYSAYTFPDALMCTTFHDYYVALAVLNTILSTGLSCYSRFLEIQKPRLCKVIRVLAFAYPYTWDSLPIFYRLFLFPGESAQNEATSYHQKHMIMTLLASFLYSAHLPERLAPGRFDYIGHSHQLFHVCVILATHMQMEAILLDKTLRKEWLLATSKPFSFSQIAGAILLCIIFSLSNIIYFSAALYRIPKPELHKKET.

Topologically, residues 1–51 (MLSLKLPRLFSIDQIPQVFHEQGILFGYRHPQSSATACILSLFQMTNETLN) are cytoplasmic. A helical membrane pass occupies residues 52–72 (IWTHLLPFWFFAWRFVTALYM). Residues 73–80 (TDIKNDSY) lie on the Extracellular side of the membrane. The chain crosses the membrane as a helical span at residues 81-101 (SWPMLVYMCTSCVYPLVSSCA). Residues 102–113 (HTFSSMSKNARH) are Cytoplasmic-facing. Residues 114–134 (ICYFLDYGAVNLFSLGSAIAY) traverse the membrane as a helical segment. Over 135–141 (SAYTFPD) the chain is Extracellular. Residues 142 to 162 (ALMCTTFHDYYVALAVLNTIL) form a helical membrane-spanning segment. Residues 163–186 (STGLSCYSRFLEIQKPRLCKVIRV) lie on the Cytoplasmic side of the membrane. The helical transmembrane segment at 187 to 207 (LAFAYPYTWDSLPIFYRLFLF) threads the bilayer. Residues 208–253 (PGESAQNEATSYHQKHMIMTLLASFLYSAHLPERLAPGRFDYIGHS) lie on the Extracellular side of the membrane. A helical membrane pass occupies residues 254–274 (HQLFHVCVILATHMQMEAILL). The Cytoplasmic portion of the chain corresponds to 275 to 294 (DKTLRKEWLLATSKPFSFSQ). The chain crosses the membrane as a helical span at residues 295–315 (IAGAILLCIIFSLSNIIYFSA). The Extracellular portion of the chain corresponds to 316 to 330 (ALYRIPKPELHKKET).

The protein belongs to the ADIPOR family. Expressed in the brain, lung, kidney, colon, adrenal and lung.

It is found in the cell membrane. Its function is as follows. Plasma membrane progesterone (P4) receptor coupled to G proteins. Seems to act through a G(i) mediated pathway. May be involved in oocyte maturation. In Homo sapiens (Human), this protein is Membrane progestin receptor gamma.